The chain runs to 335 residues: Glyceraldehyde-3-phosphate dehydrogenase, cytosolic (335 aa).

Residues Arg13–Ile14, Asp35, and Arg80 each bind NAD(+). Residues Ser151–Thr153, Thr182, Thr211–Gly212, and Arg234 each bind D-glyceraldehyde 3-phosphate. Residue Cys152 is the Nucleophile of the active site. Asn316 is a binding site for NAD(+).

Belongs to the glyceraldehyde-3-phosphate dehydrogenase family. As to quaternary structure, homotetramer.

It localises to the cytoplasm. It carries out the reaction D-glyceraldehyde 3-phosphate + phosphate + NAD(+) = (2R)-3-phospho-glyceroyl phosphate + NADH + H(+). It functions in the pathway carbohydrate degradation; glycolysis; pyruvate from D-glyceraldehyde 3-phosphate: step 1/5. The chain is Glyceraldehyde-3-phosphate dehydrogenase, cytosolic (GAPC) from Gracilaria gracilis (Red alga).